A 217-amino-acid polypeptide reads, in one-letter code: uncharacterized protein (217 aa).

This is an uncharacterized protein from Haemophilus influenzae (strain ATCC 51907 / DSM 11121 / KW20 / Rd).